A 344-amino-acid polypeptide reads, in one-letter code: Dihydroorotase (344 aa).

2 residues coordinate Zn(2+): H14 and H16. Substrate is bound by residues 16-18 (HLR) and N42. Zn(2+) contacts are provided by K100, H137, and H175. K100 carries the N6-carboxylysine modification. Position 137 (H137) interacts with substrate. L220 serves as a coordination point for substrate. D248 lines the Zn(2+) pocket. D248 is an active-site residue. Residues H252 and A264 each contribute to the substrate site.

Belongs to the metallo-dependent hydrolases superfamily. DHOase family. Class II DHOase subfamily. In terms of assembly, homodimer. Zn(2+) serves as cofactor.

The enzyme catalyses (S)-dihydroorotate + H2O = N-carbamoyl-L-aspartate + H(+). It functions in the pathway pyrimidine metabolism; UMP biosynthesis via de novo pathway; (S)-dihydroorotate from bicarbonate: step 3/3. In terms of biological role, catalyzes the reversible cyclization of carbamoyl aspartate to dihydroorotate. The protein is Dihydroorotase of Cupriavidus metallidurans (strain ATCC 43123 / DSM 2839 / NBRC 102507 / CH34) (Ralstonia metallidurans).